The following is a 103-amino-acid chain: Large ribosomal subunit protein bL21 (103 aa).

It belongs to the bacterial ribosomal protein bL21 family. As to quaternary structure, part of the 50S ribosomal subunit. Contacts protein L20.

This protein binds to 23S rRNA in the presence of protein L20. The polypeptide is Large ribosomal subunit protein bL21 (Pseudomonas fluorescens (strain Pf0-1)).